We begin with the raw amino-acid sequence, 184 residues long: uncharacterized protein (184 aa).

A helical transmembrane segment spans residues 5-27; that stretch reads YLLATAMFLIVCVYVISETVNLH.

The protein localises to the membrane. This is an uncharacterized protein from Methanocaldococcus jannaschii (strain ATCC 43067 / DSM 2661 / JAL-1 / JCM 10045 / NBRC 100440) (Methanococcus jannaschii).